We begin with the raw amino-acid sequence, 640 residues long: Threonine--tRNA ligase (640 aa).

The region spanning 1-61 is the TGS domain; the sequence is MPVITLPDGS…SNDATLQIIT (61 aa). The interval 242–533 is catalytic; sequence DHRKIGKQLD…LIEHYAGVFP (292 aa). Zn(2+)-binding residues include Cys333, His384, and His510.

Belongs to the class-II aminoacyl-tRNA synthetase family. Homodimer. Requires Zn(2+) as cofactor.

The protein resides in the cytoplasm. The catalysed reaction is tRNA(Thr) + L-threonine + ATP = L-threonyl-tRNA(Thr) + AMP + diphosphate + H(+). Catalyzes the attachment of threonine to tRNA(Thr) in a two-step reaction: L-threonine is first activated by ATP to form Thr-AMP and then transferred to the acceptor end of tRNA(Thr). Also edits incorrectly charged L-seryl-tRNA(Thr). The chain is Threonine--tRNA ligase from Pseudomonas putida (strain ATCC 700007 / DSM 6899 / JCM 31910 / BCRC 17059 / LMG 24140 / F1).